We begin with the raw amino-acid sequence, 339 residues long: FR-33289 synthase (339 aa).

The Fe(2+) site is built by His150, Asp152, and His288.

The protein belongs to the TfdA dioxygenase family. Homodimer. It depends on Fe(2+) as a cofactor.

The enzyme catalyses 3-(N-acetyl-N-hydroxy)aminopropylphosphonate + 2-oxoglutarate + O2 = (R)-(3-(acetylhydroxyamino)-2-hydroxypropyl)phosphonate + succinate + CO2. The protein operates within antibiotic biosynthesis. Monooxygenase involved in the biosynthesis of the phosphonate antibiotic FR-33289, an antimalarial agent. Catalyzes the oxidative decarboxylation of the antibiotic FR-900098 (3-(N-acetyl-N-hydroxy)aminopropylphosphonate) to form FR-33289 ((R)-(3-(acetylhydroxyamino)-2-hydroxypropyl)phosphonate). This Streptomyces rubellomurinus (strain ATCC 31215) protein is FR-33289 synthase.